The primary structure comprises 551 residues: DEAD-box ATP-dependent RNA helicase 47, mitochondrial (551 aa).

A mitochondrion-targeting transit peptide spans 1-29; the sequence is MAASTSTRFLVLLKDFSAFRKISWTCAAT. A Q motif motif is present at residues 110–138; sequence KSFEELGLPDSLLDSLEREGFSVPTDVQS. The Helicase ATP-binding domain maps to 141–340; it reads VPAIIKGHDA…KSWSHEPVLV (200 aa). 154-161 is an ATP binding site; the sequence is SYTGSGKT. Positions 274 to 277 match the DEAD box motif; it reads DEVD. The region spanning 397-548 is the Helicase C-terminal domain; that stretch reads TLRRCVHALD…ELVVTEEDKA (152 aa).

The protein belongs to the DEAD box helicase family. Mostly expressed in leaves and flowers, and, to a lower extent, in roots, seedlings and siliques, especially in meristematic regions.

The protein localises to the mitochondrion. The catalysed reaction is ATP + H2O = ADP + phosphate + H(+). Its function is as follows. Essential protein required during embryogenesis. Required for mitochondrial metabolism. Necessary for normal plasmodesmata (PD) development and aperture regulation. The chain is DEAD-box ATP-dependent RNA helicase 47, mitochondrial (RH47) from Arabidopsis thaliana (Mouse-ear cress).